The sequence spans 272 residues: Glycosylphosphatidylinositol anchor biosynthesis protein 11 (272 aa).

The segment covering 21–31 (QSTSTTKSTPG) has biased composition (polar residues). A disordered region spans residues 21–48 (QSTSTTKSTPGSQATESSTTTAGSSSSL). A compositionally biased stretch (low complexity) spans 32–48 (SQATESSTTTAGSSSSL). Helical transmembrane passes span 91-111 (VMLNALPVVAAFQMTYALLCL), 145-165 (LLASVLTSIVTPFLYFAMVLF), 177-197 (FLCAAHLALLTLFPLFYVHGV), 215-235 (TFGGLVGGIVGAWLGAVPIPL), and 248-268 (ILCGAYGGYLLGRVLGGTLFW).

The protein belongs to the PIGF family.

The protein resides in the endoplasmic reticulum membrane. It participates in glycolipid biosynthesis; glycosylphosphatidylinositol-anchor biosynthesis. Acts in the GPI biosynthetic pathway between GlcNAc-PI synthesis and GPI transfer to protein. The sequence is that of Glycosylphosphatidylinositol anchor biosynthesis protein 11 (gpi-11) from Neurospora crassa (strain ATCC 24698 / 74-OR23-1A / CBS 708.71 / DSM 1257 / FGSC 987).